The following is a 338-amino-acid chain: mRNA decay activator protein ZFP36L1 (338 aa).

A necessary and sufficient for the association with mRNA decay enzymes and mRNA decay activation region spans residues 1-111 (MTTTLVSATI…QKQPGSGQVN (111 aa)). Residue Ser-54 is modified to Phosphoserine; by MAPKAPK2. The disordered stretch occupies residues 71-113 (LKGEPAPSLSSRDSRFRDRSFSEGGERLLPTQKQPGSGQVNSS). Over residues 82-96 (RDSRFRDRSFSEGGE) the composition is skewed to basic and acidic residues. The residue at position 90 (Ser-90) is a Phosphoserine; by PKB/AKT1. Phosphoserine; by PKB/AKT1 and MAPKAPK2 is present on Ser-92. Residues 101–113 (TQKQPGSGQVNSS) are compositionally biased toward polar residues. 2 consecutive C3H1-type zinc fingers follow at residues 114–142 (RYKT…HGIH) and 152–180 (KYKT…HNAE). Residues 185–338 (LAGGRDLSAD…IFSRLSISDD (154 aa)) are necessary for mRNA decay activation. Residue Ser-203 is modified to Phosphoserine; by PKB/AKT1 and MAPKAPK2. Residues 273 to 338 (SPTTFLFRPM…IFSRLSISDD (66 aa)) are disordered. The segment covering 305–318 (YLSSSSSSHSGSDS) has biased composition (low complexity). Position 318 is a phosphoserine (Ser-318). At Ser-334 the chain carries Phosphoserine; by RPS6KA1.

As to quaternary structure, associates with the cytoplasmic CCR4-NOT deadenylase and RNA exosome complexes to trigger ARE-containing mRNA deadenylation and decay processes. Interacts with CNOT1. Interacts (via N-terminus) with CNOT6. Interacts with CNOT7; this interaction is inhibited in response to phorbol 12-myristate 13-acetate (PMA) treatment in a p38 MAPK-dependent manner. Interacts with DCP1A. Interacts (via N-terminus) with DCP2. Interacts (via N-terminus) with EXOSC2. Interacts with XRN1. Interacts (via phosphorylated form) with YWHAB; this interaction occurs in a protein kinase AKT1-dependent manner. Interacts (via phosphorylated form) with YWHAZ; this interaction occurs in a p38 MAPK- and AKT-signaling pathways. In terms of processing, phosphorylated. Phosphorylated by RPS6KA1 at Ser-334 upon phorbol 12-myristate 13-acetate (PMA) treatment; this phosphorylation results in dissociation of the CCR4-NOT deadenylase complex and induces p38 MAPK-mediated stabilization of the low-density lipoprotein receptor LDLR mRNA. Phosphorylated by protein kinase AKT1 at Ser-92 and Ser-203 in response to insulin; these phosphorylations stabilize ZFP36L1, increase the association with 14-3-3 proteins and mediate ARE-containing mRNA stabilization. AKT1-mediated phosphorylation at Ser-92 does not impair ARE-containing RNA-binding. Phosphorylated at Ser-54, Ser-92 and Ser-203 by MAPKAPK2; these phosphorylations increase the association with 14-3-3 proteins and mediate ARE-containing mRNA stabilization in a protein kinase AKT1-independent manner. MAPKAPK2-mediated phosphorylations at Ser-54, Ser-92 and Ser-203 do not impair ARE-containing RNA-binding. Phosphorylations increase the association with 14-3-3 proteins and mediate ARE-containing mRNA stabilization during early adipogenesis in a p38 MAPK- and AKT-dependent manner. Ubiquitinated. Ubiquitination leads to proteasomal degradation, a process inhibited by phosphorylations at Ser-90, Ser-92 and Ser-203. As to expression, expressed in preadipocytes and adipocytes. Expressed in the proximal and distal tubules in the renal cortex (at protein level). Expressed in ovary, heart, kidney, lung, spleen and thymus. Weakly expressed in brain, liver and testis. Expressed in osteoblasts. Expressed in embryonic stem cells (ESCs). Expressed through B lymphocyte development.

It localises to the nucleus. Its subcellular location is the cytoplasm. It is found in the cytoplasmic granule. The protein resides in the P-body. Its function is as follows. Zinc-finger RNA-binding protein that destabilizes several cytoplasmic AU-rich element (ARE)-containing mRNA transcripts by promoting their poly(A) tail removal or deadenylation, and hence provide a mechanism for attenuating protein synthesis. Acts as a 3'-untranslated region (UTR) ARE mRNA-binding adapter protein to communicate signaling events to the mRNA decay machinery. Functions by recruiting the CCR4-NOT deadenylating complex and components of the cytoplasmic RNA decay machinery to the bound ARE-containing mRNAs, and hence promotes ARE-mediated mRNA deadenylation and decay processes. Also induces the degradation of ARE-containing mRNAs even in absence of poly(A) tail. Binds to 3'-UTR ARE of numerous mRNAs. Positively regulates early adipogenesis by promoting ARE-mediated mRNA decay of immediate early genes (IEGs). Promotes ARE-mediated mRNA decay of mineralocorticoid receptor NR3C2 mRNA in response to hypertonic stress. Negatively regulates hematopoietic/erythroid cell differentiation by promoting ARE-mediated mRNA decay of the transcription factor STAT5B mRNA. Positively regulates monocyte/macrophage cell differentiation by promoting ARE-mediated mRNA decay of the cyclin-dependent kinase CDK6 mRNA. Promotes degradation of ARE-containing pluripotency-associated mRNAs in embryonic stem cells (ESCs), such as NANOG, through a fibroblast growth factor (FGF)-induced MAPK-dependent signaling pathway, and hence attenuates ESC self-renewal and positively regulates mesendoderm differentiation. May play a role in mediating pro-apoptotic effects in malignant B-cells by promoting ARE-mediated mRNA decay of BCL2 mRNA. In association with ZFP36L2 maintains quiescence on developing B lymphocytes by promoting ARE-mediated decay of several mRNAs encoding cell cycle regulators that help B cells progress through the cell cycle, and hence ensuring accurate variable-diversity-joining (VDJ) recombination and functional immune cell formation. Together with ZFP36L2 is also necessary for thymocyte development and prevention of T-cell acute lymphoblastic leukemia (T-ALL) transformation by promoting ARE-mediated mRNA decay of the oncogenic transcription factor NOTCH1 mRNA. Involved in the delivery of target ARE-mRNAs to processing bodies (PBs). In addition to its cytosolic mRNA-decay function, plays a role in the regulation of nuclear mRNA 3'-end processing; modulates mRNA 3'-end maturation efficiency of the DLL4 mRNA through binding with an ARE embedded in a weak noncanonical polyadenylation (poly(A)) signal in endothelial cells. Also involved in the regulation of stress granule (SG) and P-body (PB) formation and fusion. Plays a role in vasculogenesis and endocardial development. Involved in the regulation of keratinocyte proliferation, differentiation and apoptosis. Plays a role in myoblast cell differentiation. This chain is mRNA decay activator protein ZFP36L1, found in Mus musculus (Mouse).